The following is an 842-amino-acid chain: Ionotropic receptor 21a (842 aa).

Positions Met1–Ala15 are cleaved as a signal peptide. N-linked (GlcNAc...) asparagine glycosylation is present at Asn325. Transmembrane regions (helical) follow at residues Trp405–Thr425 and Trp437–Phe457. Residue Asn469 is glycosylated (N-linked (GlcNAc...) asparagine). Residues Trp479 to Leu499 traverse the membrane as a helical segment. Residues Asn533, Asn558, Asn583, and Asn588 are each glycosylated (N-linked (GlcNAc...) asparagine). Residues Met680–Val700 form a helical membrane-spanning segment. The segment at Trp722 to Ala745 is disordered. 2 N-linked (GlcNAc...) asparagine glycosylation sites follow: Asn765 and Asn797.

It belongs to the glutamate-gated ion channel (TC 1.A.10.1) family. In terms of tissue distribution, expressed in the dorsal organ cool cells. In the antenna, expressed in approximately six neurons in the arista as well as five to ten neurons near the third chamber of the sacculus.

It is found in the cell membrane. In terms of biological role, integral part of a neural sensory system in the antenna that provides the neural basis for the response to environmental changes in temperature (thermosensation). Together with Ir25a and Ir93a, mediates the response of the dorsal organ cool cells, a trio of cool-responsive neurons, to cooling and is required for cool avoidance behavior. This chain is Ionotropic receptor 21a, found in Drosophila melanogaster (Fruit fly).